A 128-amino-acid polypeptide reads, in one-letter code: Small ribosomal subunit protein eS8 (128 aa).

This sequence belongs to the eukaryotic ribosomal protein eS8 family. In terms of assembly, part of the 30S ribosomal subunit.

The protein is Small ribosomal subunit protein eS8 of Methanococcus vannielii (strain ATCC 35089 / DSM 1224 / JCM 13029 / OCM 148 / SB).